A 504-amino-acid polypeptide reads, in one-letter code: Maturase K (504 aa).

The protein belongs to the intron maturase 2 family. MatK subfamily.

It is found in the plastid. It localises to the chloroplast. Usually encoded in the trnK tRNA gene intron. Probably assists in splicing its own and other chloroplast group II introns. The polypeptide is Maturase K (Aruncus dioicus (Goat's beard)).